Consider the following 351-residue polypeptide: Translation initiation factor eIF2B subunit beta (351 aa).

This sequence belongs to the eIF-2B alpha/beta/delta subunits family. Component of the translation initiation factor 2B (eIF2B) complex which is a heterodecamer of two sets of five different subunits: alpha, beta, gamma, delta and epsilon. Subunits alpha, beta and delta comprise a regulatory subcomplex and subunits epsilon and gamma comprise a catalytic subcomplex. Within the complex, the hexameric regulatory complex resides at the center, with the two heterodimeric catalytic subcomplexes bound on opposite sides.

It localises to the cytoplasm. It is found in the cytosol. Its activity is regulated as follows. Activated by the chemical integrated stress response (ISR) inhibitor ISRIB which stimulates guanine nucleotide exchange factor activity for both phosphorylated and unphosphorylated eIF2. In terms of biological role, acts as a component of the translation initiation factor 2B (eIF2B) complex, which catalyzes the exchange of GDP for GTP on eukaryotic initiation factor 2 (eIF2) gamma subunit. Its guanine nucleotide exchange factor activity is repressed when bound to eIF2 complex phosphorylated on the alpha subunit, thereby limiting the amount of methionyl-initiator methionine tRNA available to the ribosome and consequently global translation is repressed. This chain is Translation initiation factor eIF2B subunit beta (EIF2B2), found in Oryctolagus cuniculus (Rabbit).